The primary structure comprises 149 residues: MIRVVATGTFDILHPGHLYYLEESRNLGDELSVIVARDANVKHKPRPFLPEDQRLRMIRALKPVDHALLGDLHDMFRPIAEIRPDIITLGFNQHFDEEHLRQKLRERGLDADVVRIPGYPGSLASSSKIIERILNTRGPPDPTGSHGEE.

ATP is bound by residues Thr-9 to Phe-10, His-14 to His-17, Asn-92, and Tyr-119.

The protein belongs to the archaeal FAD synthase family. Homodimer. A divalent metal cation is required as a cofactor.

The catalysed reaction is FMN + ATP + H(+) = FAD + diphosphate. Its pathway is cofactor biosynthesis; FAD biosynthesis; FAD from FMN: step 1/1. In terms of biological role, catalyzes the transfer of the AMP portion of ATP to flavin mononucleotide (FMN) to produce flavin adenine dinucleotide (FAD) coenzyme. The protein is FAD synthase of Methanoculleus marisnigri (strain ATCC 35101 / DSM 1498 / JR1).